The sequence spans 124 residues: Fluoride-specific ion channel FluC 1 (124 aa).

4 consecutive transmembrane segments (helical) span residues Ala-7–Val-27, Phe-35–Gly-55, Leu-63–Leu-83, and Ile-101–Trp-121.

The protein belongs to the fluoride channel Fluc/FEX (TC 1.A.43) family.

It is found in the cell membrane. The catalysed reaction is fluoride(in) = fluoride(out). In terms of biological role, fluoride-specific ion channel. Important for reducing fluoride concentration in the cell, thus reducing its toxicity. This is Fluoride-specific ion channel FluC 1 from Rubrobacter xylanophilus (strain DSM 9941 / JCM 11954 / NBRC 16129 / PRD-1).